The sequence spans 87 residues: Small ribosomal subunit protein uS15c (87 aa).

The interval 1-20 is disordered; sequence MNQNLSIRKRNKLKQDSGSP.

Belongs to the universal ribosomal protein uS15 family. Part of the 30S ribosomal subunit.

It localises to the plastid. The protein localises to the chloroplast. The chain is Small ribosomal subunit protein uS15c (rps15) from Zygnema circumcarinatum (Green alga).